The chain runs to 99 residues: MKITEKEVRYVAGLANLNLTEQEIARMQVDLDGILEHMARLNEIDTEGVAPMSQVLFEAEETATLRPDSPIPPLGNQAAMANAPQSGAGYFKVPKVIER.

Belongs to the GatC family. In terms of assembly, heterotrimer of A, B and C subunits.

It catalyses the reaction L-glutamyl-tRNA(Gln) + L-glutamine + ATP + H2O = L-glutaminyl-tRNA(Gln) + L-glutamate + ADP + phosphate + H(+). The catalysed reaction is L-aspartyl-tRNA(Asn) + L-glutamine + ATP + H2O = L-asparaginyl-tRNA(Asn) + L-glutamate + ADP + phosphate + 2 H(+). Functionally, allows the formation of correctly charged Asn-tRNA(Asn) or Gln-tRNA(Gln) through the transamidation of misacylated Asp-tRNA(Asn) or Glu-tRNA(Gln) in organisms which lack either or both of asparaginyl-tRNA or glutaminyl-tRNA synthetases. The reaction takes place in the presence of glutamine and ATP through an activated phospho-Asp-tRNA(Asn) or phospho-Glu-tRNA(Gln). This chain is Aspartyl/glutamyl-tRNA(Asn/Gln) amidotransferase subunit C, found in Solibacter usitatus (strain Ellin6076).